The chain runs to 135 residues: Large ribosomal subunit protein uL22c (135 aa).

The protein belongs to the universal ribosomal protein uL22 family. Part of the 50S ribosomal subunit.

Its subcellular location is the plastid. Its function is as follows. This protein binds specifically to 23S rRNA. The globular domain of the protein is located near the polypeptide exit tunnel on the outside of the subunit, while an extended beta-hairpin is found that lines the wall of the exit tunnel in the center of the 70S ribosome. The sequence is that of Large ribosomal subunit protein uL22c (rpl22) from Cuscuta reflexa (Southern Asian dodder).